Reading from the N-terminus, the 179-residue chain is MAKLHDYYKDEVVKKLMTEFNYNSVMQVPRVEKITLNMGVGEAIADKKLLDNAAADLAAISGQKPLITKARKSVAGFKIRQGYPIGCKVTLRGERMWEFFERLITIAVPRIRDFRGLSAKSFDGRGNYSMGVREQIIFPEIDYDKVDRVRGLDITITTTAKSDEEGRALLAAFDFPFRK.

Lys-3 carries the post-translational modification N6-acetyllysine.

The protein belongs to the universal ribosomal protein uL5 family. As to quaternary structure, part of the 50S ribosomal subunit; part of the 5S rRNA/L5/L18/L25 subcomplex. Contacts the 5S rRNA and the P site tRNA. Forms a bridge to the 30S subunit in the 70S ribosome.

This is one of the proteins that bind and probably mediate the attachment of the 5S RNA into the large ribosomal subunit, where it forms part of the central protuberance. In the 70S ribosome it contacts protein S13 of the 30S subunit (bridge B1b), connecting the 2 subunits; this bridge is implicated in subunit movement. Contacts the P site tRNA; the 5S rRNA and some of its associated proteins might help stabilize positioning of ribosome-bound tRNAs. The protein is Large ribosomal subunit protein uL5 of Escherichia coli O45:K1 (strain S88 / ExPEC).